We begin with the raw amino-acid sequence, 156 residues long: Succinate dehydrogenase assembly factor 2-B, mitochondrial (156 aa).

Residues 1–24 (MLRQFIISTVGRRQPLLMILQSRL) constitute a mitochondrion transit peptide.

Belongs to the SDHAF2 family. Interacts with the flavoprotein subunit within the SDH catalytic dimer.

Its subcellular location is the mitochondrion matrix. In terms of biological role, plays an essential role in the assembly of succinate dehydrogenase (SDH), an enzyme complex (also referred to as respiratory complex II) that is a component of both the tricarboxylic acid (TCA) cycle and the mitochondrial electron transport chain, and which couples the oxidation of succinate to fumarate with the reduction of ubiquinone (coenzyme Q) to ubiquinol. Required for flavinylation (covalent attachment of FAD) of the flavoprotein subunit of the SDH catalytic dimer. This chain is Succinate dehydrogenase assembly factor 2-B, mitochondrial, found in Drosophila yakuba (Fruit fly).